The chain runs to 174 residues: MTTIVSVRRNNQVVIAGDGQVSLGNTVMKGNARKVRRLYHNKVLAGFAGGTADAFTLFERFEAKLEMHQGHLLKSAVELAKDWRTDKMLRKLEAMLVVADTEASLIITGNGDVVQPEHDLIAIGSGGNYAQAAALALLQNTELSAQEIADKSLTIAGDICVFTNQFKTIEQLDY.

The active site involves threonine 2. Glycine 157, cysteine 160, and threonine 163 together coordinate Na(+).

Belongs to the peptidase T1B family. HslV subfamily. A double ring-shaped homohexamer of HslV is capped on each side by a ring-shaped HslU homohexamer. The assembly of the HslU/HslV complex is dependent on binding of ATP.

Its subcellular location is the cytoplasm. It catalyses the reaction ATP-dependent cleavage of peptide bonds with broad specificity.. Its activity is regulated as follows. Allosterically activated by HslU binding. In terms of biological role, protease subunit of a proteasome-like degradation complex believed to be a general protein degrading machinery. This Shewanella denitrificans (strain OS217 / ATCC BAA-1090 / DSM 15013) protein is ATP-dependent protease subunit HslV.